We begin with the raw amino-acid sequence, 338 residues long: tRNA dimethylallyltransferase (338 aa).

13–20 (GPTASGKT) contacts ATP. Position 15-20 (15-20 (TASGKT)) interacts with substrate. 2 interaction with substrate tRNA regions span residues 38 to 41 (DSTL) and 162 to 166 (QRVSR).

It belongs to the IPP transferase family. Monomer. Mg(2+) serves as cofactor.

It catalyses the reaction adenosine(37) in tRNA + dimethylallyl diphosphate = N(6)-dimethylallyladenosine(37) in tRNA + diphosphate. Functionally, catalyzes the transfer of a dimethylallyl group onto the adenine at position 37 in tRNAs that read codons beginning with uridine, leading to the formation of N6-(dimethylallyl)adenosine (i(6)A). This is tRNA dimethylallyltransferase from Cellvibrio japonicus (strain Ueda107) (Pseudomonas fluorescens subsp. cellulosa).